A 324-amino-acid polypeptide reads, in one-letter code: MKPSIILYKTLPDDLLHRLEAHFTVTQVPNLHPETVARHAQAFASAQGLLGASETVNRALLEKMPALRAASTISVGYDNVEVDALTARKIVLMHTPAVLTETVADTVMALMLTTARRVVDVAERVKAGEWTESIGPAWFGIDVHHKTLGIVGMGRIGMALAQRAHFGFTMPVLYHARRRHQEAEDRFNARYCDLDTLLQEADFVCVILPLTAETRHLFGATQFARMKSSAIFINAGRGPVVDENALIAALQNGEIYAAGLDVFEQEPLSVDSPLLNMSNVVAVPHIGSATHETRYNMMACAVDNLIDALQGKIEKNCVNPQAAG.

Catalysis depends on residues Arg-237 and Glu-266. The active-site Proton donor is the His-285.

The protein belongs to the D-isomer specific 2-hydroxyacid dehydrogenase family. GhrB subfamily. In terms of assembly, homodimer.

The protein localises to the cytoplasm. The catalysed reaction is glycolate + NADP(+) = glyoxylate + NADPH + H(+). The enzyme catalyses (R)-glycerate + NAD(+) = 3-hydroxypyruvate + NADH + H(+). It carries out the reaction (R)-glycerate + NADP(+) = 3-hydroxypyruvate + NADPH + H(+). In terms of biological role, catalyzes the NADPH-dependent reduction of glyoxylate and hydroxypyruvate into glycolate and glycerate, respectively. The sequence is that of Glyoxylate/hydroxypyruvate reductase B from Salmonella agona (strain SL483).